Consider the following 137-residue polypeptide: Gonadotropin subunit beta-1 (137 aa).

Positions 1–24 (MYCTHLKTLQLVVMATLWVTPVRA) are cleaved as a signal peptide. 5 disulfides stabilise this stretch: cysteine 32–cysteine 78, cysteine 46–cysteine 93, cysteine 55–cysteine 108, cysteine 59–cysteine 110, and cysteine 113–cysteine 120. Asparagine 36 carries an N-linked (GlcNAc...) asparagine glycan.

This sequence belongs to the glycoprotein hormones subunit beta family. Heterodimer of an alpha and a beta chain.

It localises to the secreted. Involved in gametogenesis and steroidogenesis. The polypeptide is Gonadotropin subunit beta-1 (cgba) (Oncorhynchus masou (Cherry salmon)).